The chain runs to 81 residues: RNA-binding protein Hfq (81 aa).

The 60-residue stretch at 10-69 folds into the Sm domain; it reads DPFLNTLRREHVPVSIYLVNGIKLQGQIESFDQYVVLLRNTVTQMVYKHAISTIVPGRAV.

Belongs to the Hfq family. Homohexamer.

Functionally, RNA chaperone that binds small regulatory RNA (sRNAs) and mRNAs to facilitate mRNA translational regulation in response to envelope stress, environmental stress and changes in metabolite concentrations. Also binds with high specificity to tRNAs. The polypeptide is RNA-binding protein Hfq (Variovorax paradoxus (strain S110)).